We begin with the raw amino-acid sequence, 876 residues long: Phosphoenolpyruvate carboxylase (876 aa).

Residues H138 and K543 contribute to the active site.

Belongs to the PEPCase type 1 family. Mg(2+) serves as cofactor.

The catalysed reaction is oxaloacetate + phosphate = phosphoenolpyruvate + hydrogencarbonate. In terms of biological role, forms oxaloacetate, a four-carbon dicarboxylic acid source for the tricarboxylic acid cycle. This Pseudomonas fluorescens (strain Pf0-1) protein is Phosphoenolpyruvate carboxylase.